We begin with the raw amino-acid sequence, 166 residues long: UPF0336 protein Mb0656 (166 aa).

The protein belongs to the UPF0336 family.

This Mycobacterium bovis (strain ATCC BAA-935 / AF2122/97) protein is UPF0336 protein Mb0656.